We begin with the raw amino-acid sequence, 429 residues long: Adenylosuccinate synthetase (429 aa).

GTP-binding positions include 12-18 (GDEGKGK) and 40-42 (GHT). D13 (proton acceptor) is an active-site residue. Residues D13 and G40 each coordinate Mg(2+). IMP contacts are provided by residues 13 to 16 (DEGK), 38 to 41 (NAGH), T128, R142, Q223, T238, and R302. Residue H41 is the Proton donor of the active site. 298 to 304 (TTTGRAR) is a substrate binding site. GTP-binding positions include R304, 330–332 (SID), and 412–414 (SVG).

It belongs to the adenylosuccinate synthetase family. As to quaternary structure, homodimer. Mg(2+) serves as cofactor.

It localises to the cytoplasm. The enzyme catalyses IMP + L-aspartate + GTP = N(6)-(1,2-dicarboxyethyl)-AMP + GDP + phosphate + 2 H(+). It participates in purine metabolism; AMP biosynthesis via de novo pathway; AMP from IMP: step 1/2. Its function is as follows. Plays an important role in the de novo pathway of purine nucleotide biosynthesis. Catalyzes the first committed step in the biosynthesis of AMP from IMP. The sequence is that of Adenylosuccinate synthetase from Oceanobacillus iheyensis (strain DSM 14371 / CIP 107618 / JCM 11309 / KCTC 3954 / HTE831).